The primary structure comprises 632 residues: Nucleoside triphosphatase I (632 aa).

A Helicase ATP-binding domain is found at Phe-42 to Lys-204. Position 55-62 (His-55–Thr-62) interacts with ATP. A DEXH box motif is present at residues Asp-141–His-144. The region spanning Lys-367–Lys-532 is the Helicase C-terminal domain. The segment at Asp-457–Phe-524 is binding to the cap-specific mRNA (nucleoside-2'-O-)-methyltransferase.

It belongs to the helicase family. NPH I subfamily. In terms of assembly, monomer. Interacts (via C-terminus) with RAP94 (via N-terminus). Interacts with the cap-specific mRNA (nucleoside-2'-O-)-methyltransferase.

It localises to the virion. It carries out the reaction a ribonucleoside 5'-triphosphate + H2O = a ribonucleoside 5'-diphosphate + phosphate + H(+). Its function is as follows. DNA-dependent ATPase required for providing the needed energy to achieve the termination of early transcripts. Acts in concert with the RAP94 subunit of the virion RNA polymerase and the capping enzyme/VTF to catalyze release of UUUUUNU-containing nascent RNA from the elongation complex. NPH-I must bind ssDNA in order to exhibit ATPase activity. In Myxoma virus (strain Lausanne) (MYXV), this protein is Nucleoside triphosphatase I (NPH1).